Reading from the N-terminus, the 537-residue chain is CTP synthase (537 aa).

Residues 1–267 (MTKYIFVTGG…DQIVCDHLKL (267 aa)) are amidoligase domain. Ser13 provides a ligand contact to CTP. UTP is bound at residue Ser13. Residue 14-19 (SIGKGI) participates in ATP binding. Tyr54 lines the L-glutamine pocket. An ATP-binding site is contributed by Asp71. Residues Asp71 and Glu141 each coordinate Mg(2+). CTP contacts are provided by residues 148–150 (DIE), 188–193 (KTKPTQ), and Lys224. Residues 188-193 (KTKPTQ) and Lys224 contribute to the UTP site. ATP is bound at residue 240–242 (RDV). Positions 292–535 (RIALVGKYVE…VTAAVKNKNQ (244 aa)) constitute a Glutamine amidotransferase type-1 domain. Gly354 is an L-glutamine binding site. Catalysis depends on Cys381, which acts as the Nucleophile; for glutamine hydrolysis. Residues 382-385 (LGMQ), Glu405, and Arg463 each bind L-glutamine. Residues His508 and Glu510 contribute to the active site.

Belongs to the CTP synthase family. Homotetramer.

The enzyme catalyses UTP + L-glutamine + ATP + H2O = CTP + L-glutamate + ADP + phosphate + 2 H(+). The catalysed reaction is L-glutamine + H2O = L-glutamate + NH4(+). It catalyses the reaction UTP + NH4(+) + ATP = CTP + ADP + phosphate + 2 H(+). It participates in pyrimidine metabolism; CTP biosynthesis via de novo pathway; CTP from UDP: step 2/2. With respect to regulation, allosterically activated by GTP, when glutamine is the substrate; GTP has no effect on the reaction when ammonia is the substrate. The allosteric effector GTP functions by stabilizing the protein conformation that binds the tetrahedral intermediate(s) formed during glutamine hydrolysis. Inhibited by the product CTP, via allosteric rather than competitive inhibition. Functionally, catalyzes the ATP-dependent amination of UTP to CTP with either L-glutamine or ammonia as the source of nitrogen. Regulates intracellular CTP levels through interactions with the four ribonucleotide triphosphates. This chain is CTP synthase, found in Streptococcus equi subsp. zooepidemicus (strain H70).